Consider the following 288-residue polypeptide: Nucleotide-binding protein Mlg_2233 (288 aa).

11 to 18 (GLSGSGKS) lines the ATP pocket. A GTP-binding site is contributed by 63 to 66 (DARN).

It belongs to the RapZ-like family.

Functionally, displays ATPase and GTPase activities. In Alkalilimnicola ehrlichii (strain ATCC BAA-1101 / DSM 17681 / MLHE-1), this protein is Nucleotide-binding protein Mlg_2233.